The following is a 392-amino-acid chain: Vascular endothelial growth factor A, long form (392 aa).

2 disordered regions span residues 1–44 (MTDR…VEGV) and 73–174 (DKPI…GPGR). The span at 89-104 (PGPEKRGEEEKEEERG) shows a compositional bias: basic and acidic residues. Low complexity-rich tracts occupy residues 121–143 (AAVC…ASVP) and 158–174 (PRSP…GPGR). Disulfide bonds link Cys229–Cys271, Cys260–Cys305, and Cys264–Cys307. Asn278 is a glycosylation site (N-linked (GlcNAc...) asparagine). The span at 309–320 (PKKDRTKPEKKS) shows a compositional bias: basic and acidic residues. The interval 309-337 (PKKDRTKPEKKSVRGKGKGQKRKRKKSRF) is disordered. Residues 321–337 (VRGKGKGQKRKRKKSRF) are compositionally biased toward basic residues.

Belongs to the PDGF/VEGF growth factor family. Homodimer; disulfide-linked. Also found as heterodimer with PGF. Interacts with NRP1. Interacts with isoform 2 of BSG. Interacts with CD82; this interaction inhibits VEGFA-mediated signaling pathway. In terms of processing, produced by use of an alternative upstream CUG codon and post-translationally processed into the N-terminal N-VEGF form and the C-terminal secreted VEGFA form. In developing embryos, expressed mainly in the choroid plexus, paraventricular neuroepithelium, placenta and kidney glomeruli. Also found in bronchial epithelium, adrenal gland and in seminiferous tubules of testis. High expression continues in kidney glomeruli and choroid plexus in adults.

It localises to the cytoplasm. Its subcellular location is the nucleus. The protein localises to the secreted. It is found in the endoplasmic reticulum. The protein resides in the golgi apparatus. It localises to the extracellular space. Its subcellular location is the extracellular matrix. The protein localises to the cell membrane. In terms of biological role, participates in the induction of key genes involved in the response to hypoxia and in the induction of angiogenesis such as HIF1A. Involved in protecting cells from hypoxia-mediated cell death. Functionally, growth factor active in angiogenesis, vasculogenesis and endothelial cell growth. Induces endothelial cell proliferation, promotes cell migration, inhibits apoptosis and induces permeabilization of blood vessels. Binds to the FLT1/VEGFR1 and KDR/VEGFR2 receptors, heparan sulfate and heparin. Binds to the NRP1/neuropilin-1 receptor. Binding to NRP1 receptor initiates a signaling pathway needed for motor neuron axon guidance and cell body migration, including for the caudal migration of facial motor neurons from rhombomere 4 to rhombomere 6 during embryonic development. Also binds the DEAR/FBXW7-AS1 receptor. May play a role in increasing vascular permeability during lactation, when increased transport of molecules from the blood is required for efficient milk protein synthesis. The chain is Vascular endothelial growth factor A, long form (Vegfa) from Mus musculus (Mouse).